A 283-amino-acid chain; its full sequence is Homeobox protein BarH-like 2 (283 aa).

Disordered stretches follow at residues 107 to 141 (AAAA…RRSR) and 198 to 283 (KGGQ…PPLS). The span at 122–132 (SSESETEQPTP) shows a compositional bias: polar residues. Positions 139–198 (RSRTIFTELQLMGLEKKFQKQKYLSTPDRLDLAQSLGLTQLQVKTWYQNRRMKWKKMVLK) form a DNA-binding region, homeobox. Positions 268–277 (QPQELSEASS) are enriched in low complexity.

Belongs to the BAR homeobox family. As to expression, nervous system, particularly in the telencephalon, spinal cord, and dorsal root ganglia.

It localises to the nucleus. Transcription factor. Binds optimally to the DNA consensus sequence 5'-YYTAATGRTTTTY-3'. May control the expression of neural adhesion molecules such as L1 or Ng-CAM during embryonic development of both the central and peripherical nervous system. May be involved in controlling adhesive processes in keratinizing epithelia. In Mus musculus (Mouse), this protein is Homeobox protein BarH-like 2 (Barx2).